Here is a 469-residue protein sequence, read N- to C-terminus: Putative dipeptidase SSP1012 (469 aa).

His-84 serves as a coordination point for Zn(2+). Residue Asp-86 is part of the active site. Position 115 (Asp-115) interacts with Zn(2+). Catalysis depends on Glu-149, which acts as the Proton acceptor. Positions 150, 173, and 440 each coordinate Zn(2+).

The protein belongs to the peptidase M20A family. Zn(2+) serves as cofactor.

This chain is Putative dipeptidase SSP1012, found in Staphylococcus saprophyticus subsp. saprophyticus (strain ATCC 15305 / DSM 20229 / NCIMB 8711 / NCTC 7292 / S-41).